Consider the following 69-residue polypeptide: Guanine nucleotide-binding protein G(I)/G(S)/G(O) subunit gamma-T2 (69 aa).

A disordered region spans residues 47 to 69 (DPLLKGIPEDKNPFKEKGGCMIS). Basic and acidic residues predominate over residues 53–69 (IPEDKNPFKEKGGCMIS). C66 bears the Cysteine methyl ester mark. C66 is lipidated: S-farnesyl cysteine. A propeptide spans 67 to 69 (MIS) (removed in mature form).

This sequence belongs to the G protein gamma family. G proteins are composed of 3 units, alpha, beta and gamma.

The protein localises to the cell membrane. Functionally, guanine nucleotide-binding proteins (G proteins) are involved as a modulator or transducer in various transmembrane signaling systems. The beta and gamma chains are required for the GTPase activity, for replacement of GDP by GTP, and for G protein-effector interaction. The polypeptide is Guanine nucleotide-binding protein G(I)/G(S)/G(O) subunit gamma-T2 (GNGT2) (Canis lupus familiaris (Dog)).